Consider the following 218-residue polypeptide: Adenylate kinase (218 aa).

Gly10–Thr15 lines the ATP pocket. The NMP stretch occupies residues Ser30–Val59. AMP is bound by residues Thr31, Arg36, Glu57 to Val59, and Gln92. Positions Gly122 to Asp159 are LID. ATP is bound by residues Arg123 and Thr132–Tyr133. Residues Arg156 and Arg167 each contribute to the AMP site. Gln202 lines the ATP pocket.

The protein belongs to the adenylate kinase family. Monomer.

The protein resides in the cytoplasm. The enzyme catalyses AMP + ATP = 2 ADP. The protein operates within purine metabolism; AMP biosynthesis via salvage pathway; AMP from ADP: step 1/1. In terms of biological role, catalyzes the reversible transfer of the terminal phosphate group between ATP and AMP. Plays an important role in cellular energy homeostasis and in adenine nucleotide metabolism. This is Adenylate kinase from Francisella tularensis subsp. holarctica (strain LVS).